The primary structure comprises 243 residues: uncharacterized protein (243 aa).

The disordered stretch occupies residues 71–120; sequence KRTNVSQRNRKKGIKNNRPHKDINSSPDWGNAHRGTDWQSEKANGMNRAK. Basic residues predominate over residues 78–88; that stretch reads RNRKKGIKNNR. The residue at position 96 (serine 96) is a Phosphoserine.

This is an uncharacterized protein from Saccharomyces cerevisiae (strain ATCC 204508 / S288c) (Baker's yeast).